The following is a 203-amino-acid chain: FMN-dependent NADH:quinone oxidoreductase (203 aa).

FMN-binding positions include Ser9, 15 to 17 (SVS), and 139 to 142 (TRGG).

It belongs to the azoreductase type 1 family. As to quaternary structure, homodimer. Requires FMN as cofactor.

The enzyme catalyses 2 a quinone + NADH + H(+) = 2 a 1,4-benzosemiquinone + NAD(+). It catalyses the reaction N,N-dimethyl-1,4-phenylenediamine + anthranilate + 2 NAD(+) = 2-(4-dimethylaminophenyl)diazenylbenzoate + 2 NADH + 2 H(+). Functionally, quinone reductase that provides resistance to thiol-specific stress caused by electrophilic quinones. Its function is as follows. Also exhibits azoreductase activity. Catalyzes the reductive cleavage of the azo bond in aromatic azo compounds to the corresponding amines. The sequence is that of FMN-dependent NADH:quinone oxidoreductase from Albidiferax ferrireducens (strain ATCC BAA-621 / DSM 15236 / T118) (Rhodoferax ferrireducens).